A 452-amino-acid chain; its full sequence is Maltoporin (452 aa).

A signal peptide spans 1 to 25 (MMITLRKLPLAVAVAAGVMSAQAMA).

The protein belongs to the porin LamB (TC 1.B.3) family. As to quaternary structure, homotrimer formed of three 18-stranded antiparallel beta-barrels, containing three independent channels.

The protein localises to the cell outer membrane. The enzyme catalyses beta-maltose(in) = beta-maltose(out). Involved in the transport of maltose and maltodextrins. This chain is Maltoporin, found in Salmonella agona (strain SL483).